A 191-amino-acid polypeptide reads, in one-letter code: Orotate phosphoribosyltransferase (191 aa).

114-122 (EDVVTTGKS) lines the 5-phospho-alpha-D-ribose 1-diphosphate pocket. The orotate site is built by threonine 118 and arginine 146.

This sequence belongs to the purine/pyrimidine phosphoribosyltransferase family. PyrE subfamily. As to quaternary structure, homodimer. Requires Mg(2+) as cofactor.

The catalysed reaction is orotidine 5'-phosphate + diphosphate = orotate + 5-phospho-alpha-D-ribose 1-diphosphate. The protein operates within pyrimidine metabolism; UMP biosynthesis via de novo pathway; UMP from orotate: step 1/2. Catalyzes the transfer of a ribosyl phosphate group from 5-phosphoribose 1-diphosphate to orotate, leading to the formation of orotidine monophosphate (OMP). This is Orotate phosphoribosyltransferase from Clostridium botulinum (strain Langeland / NCTC 10281 / Type F).